The following is a 70-amino-acid chain: ATP synthase subunit c (70 aa).

Helical transmembrane passes span 1–21 (MNFL…SYGN) and 47–67 (FIGV…SFLI).

The protein belongs to the ATPase C chain family. As to quaternary structure, F-type ATPases have 2 components, F(1) - the catalytic core - and F(0) - the membrane proton channel. F(1) has five subunits: alpha(3), beta(3), gamma(1), delta(1), epsilon(1). F(0) has three main subunits: a(1), b(2) and c(10-14). The alpha and beta chains form an alternating ring which encloses part of the gamma chain. F(1) is attached to F(0) by a central stalk formed by the gamma and epsilon chains, while a peripheral stalk is formed by the delta and b chains.

The protein resides in the cell membrane. F(1)F(0) ATP synthase produces ATP from ADP in the presence of a proton or sodium gradient. F-type ATPases consist of two structural domains, F(1) containing the extramembraneous catalytic core and F(0) containing the membrane proton channel, linked together by a central stalk and a peripheral stalk. During catalysis, ATP synthesis in the catalytic domain of F(1) is coupled via a rotary mechanism of the central stalk subunits to proton translocation. In terms of biological role, key component of the F(0) channel; it plays a direct role in translocation across the membrane. A homomeric c-ring of between 10-14 subunits forms the central stalk rotor element with the F(1) delta and epsilon subunits. In Latilactobacillus sakei subsp. sakei (strain 23K) (Lactobacillus sakei subsp. sakei), this protein is ATP synthase subunit c.